The sequence spans 227 residues: Venom allergen 5 (227 aa).

An N-terminal signal peptide occupies residues 1–21; it reads MKISCLICLVIVLTIIHLSQA. 4 disulfides stabilise this stretch: Cys25/Cys37, Cys29/Cys125, Cys49/Cys117, and Cys193/Cys210. One can recognise an SCP domain in the interval 69–212; the sequence is EEHNRFRQKV…MQIHYLICNY (144 aa).

The protein belongs to the CRISP family. Venom allergen 5-like subfamily. Expressed by the venom gland.

The protein localises to the secreted. This is Venom allergen 5 from Polistes dominula (European paper wasp).